The following is a 106-amino-acid chain: Small ribosomal subunit protein uS10 (106 aa).

Belongs to the universal ribosomal protein uS10 family. Part of the 30S ribosomal subunit.

In terms of biological role, involved in the binding of tRNA to the ribosomes. This chain is Small ribosomal subunit protein uS10, found in Solibacter usitatus (strain Ellin6076).